A 131-amino-acid chain; its full sequence is Sec-independent protein translocase protein TatB (131 aa).

Residues 2 to 22 form a helical membrane-spanning segment; sequence LGSLSWEHMLVLVVVGLVVLG. The segment at 96-131 is disordered; that stretch reads AFDRPVNGAAAQPPPAPAPPPEPHRPGQTPFDADAT. Over residues 107–116 the composition is skewed to pro residues; it reads QPPPAPAPPP.

Belongs to the TatB family. As to quaternary structure, the Tat system comprises two distinct complexes: a TatABC complex, containing multiple copies of TatA, TatB and TatC subunits, and a separate TatA complex, containing only TatA subunits. Substrates initially bind to the TatABC complex, which probably triggers association of the separate TatA complex to form the active translocon.

It is found in the cell membrane. Functionally, part of the twin-arginine translocation (Tat) system that transports large folded proteins containing a characteristic twin-arginine motif in their signal peptide across membranes. Together with TatC, TatB is part of a receptor directly interacting with Tat signal peptides. TatB may form an oligomeric binding site that transiently accommodates folded Tat precursor proteins before their translocation. The sequence is that of Sec-independent protein translocase protein TatB from Mycobacterium avium (strain 104).